A 1166-amino-acid chain; its full sequence is Reverse gyrase (1166 aa).

The RG N-terminal-type zinc finger occupies 1–40 (MINVMYKNSCPNCGGDISADRLLNGLPCETCLPYINGIDG). 4 residues coordinate Zn(2+): cysteine 10, cysteine 13, cysteine 28, and cysteine 31. Residues glutamine 92 and 109–116 (APTGLGKT) each bind ATP. A Helicase ATP-binding domain is found at 96-285 (LRRLVSNQSF…ALRLLTGFEP (190 aa)). Residues 190–193 (DDAD) carry the DEAD box motif. Residues 576–1166 (FNISTGLLIV…VNPLKSEQNV (591 aa)) are topoisomerase I. The region spanning 580 to 743 (TGLLIVESPT…NIYRITYHEI (164 aa)) is the Toprim domain. Glutamate 586 serves as a coordination point for Mg(2+). Residues 662–689 (IKKCLDCNKTFSIASDKCPYCGSTNVQT) form an RG C-terminal-type zinc finger. Zn(2+)-binding residues include cysteine 665, cysteine 668, cysteine 679, and cysteine 682. Aspartate 712 contributes to the Mg(2+) binding site. One can recognise a Topo IA-type catalytic domain in the interval 759-1157 (NTNLVMSQIV…EIFSEISTLV (399 aa)). Catalysis depends on tyrosine 903, which acts as the O-(5'-phospho-DNA)-tyrosine intermediate.

This sequence in the N-terminal section; belongs to the DEAD box helicase family. DDVD subfamily. In the C-terminal section; belongs to the type IA topoisomerase family. Monomer. Zn(2+) serves as cofactor. It depends on Mg(2+) as a cofactor.

The protein localises to the cytoplasm. It catalyses the reaction ATP + H2O = ADP + phosphate + H(+). Inhibited by UV light-induced lesions; substrate is completely cleaved but a nicked form accumulates, suggesting the reaction is blocked between the cleavage and ligation steps. Inhibited by actinomycin D; substrate DNA remains negatively supercoiled in this case. Activity is stimulated by SSB from S.solfataricus strain P2. Positive supercoiling is inhibited by Sul7d (also called Sso7d) from S.solfataricus strain MT4; SSB from S.solfataricus strain P2 relieves this inhibition. Modifies the topological state of DNA by introducing positive supercoils in an ATP-dependent process. Increases the linking number in steps of +1. In vitro requires high concentrations to supercoil negatively supercoiled DNA, relaxes plasmid DNA first; DNA single-strand binding protein (SSB) from S.solfataricus strain P2 stimulates positive supercoiling. SSB stimulates DNA-binding by reverse gyrase, and thus all subsequent steps. Binds to single-stranded DNA, transiently cleaves and then rejoins the ends, introducing a positive supercoil in the process. The scissile phosphodiester is attacked by the catalytic tyrosine of the enzyme, resulting in the formation of a DNA-(5'-phosphotyrosyl)-enzyme intermediate. May be involved in DNA damage response. Probably involved in rewinding DNA strands in regions of the chromosome that have opened up to allow replication, transcription, DNA repair and/or for DNA protection. This Saccharolobus shibatae (strain ATCC 51178 / DSM 5389 / JCM 8931 / NBRC 15437 / B12) (Sulfolobus shibatae) protein is Reverse gyrase.